The chain runs to 75 residues: Protein Tlp homolog (75 aa).

A disordered region spans residues 52–75 (RREALDGMREEIKDEARDKKNGYM).

It belongs to the Tlp family.

In Clostridium botulinum (strain Okra / Type B1), this protein is Protein Tlp homolog.